The sequence spans 408 residues: Solute carrier family 35 member F1 (408 aa).

A disordered region spans residues 1–21 (MIPPEQPQQQLQPPSPAPPNH). 10 consecutive transmembrane segments (helical) span residues 60 to 80 (MLIS…IGLT), 94 to 114 (VFQS…TLAV), 129 to 147 (WWKY…YLVV), 158 to 178 (IQLL…FFLL), 186 to 206 (FIGI…DVLV), 221 to 241 (LLVL…EYII), 247 to 267 (VEFL…QLAI), 284 to 304 (LLYV…PVVI), 311 to 331 (SVNL…LFLF), and 335 to 355 (FSGL…LYSS).

Belongs to the SLC35F solute transporter family.

The protein localises to the cytoplasmic vesicle. It localises to the secretory vesicle. It is found in the synaptic vesicle membrane. Putative solute transporter. In Homo sapiens (Human), this protein is Solute carrier family 35 member F1 (SLC35F1).